Consider the following 294-residue polypeptide: Urease accessory protein UreD 1 (294 aa).

The disordered stretch occupies residues 1–22; it reads MALSLDGLPEKPAPAEAPSPPV. Over residues 11-21 the composition is skewed to pro residues; sequence KPAPAEAPSPP.

The protein belongs to the UreD family. In terms of assembly, ureD, UreF and UreG form a complex that acts as a GTP-hydrolysis-dependent molecular chaperone, activating the urease apoprotein by helping to assemble the nickel containing metallocenter of UreC. The UreE protein probably delivers the nickel.

The protein localises to the cytoplasm. In terms of biological role, required for maturation of urease via the functional incorporation of the urease nickel metallocenter. The protein is Urease accessory protein UreD 1 of Methylorubrum extorquens (strain PA1) (Methylobacterium extorquens).